Reading from the N-terminus, the 1066-residue chain is Beta-galactosidase (1066 aa).

Residues N110 and D209 each contribute to the substrate site. D209 is a binding site for Na(+). 3 residues coordinate Mg(2+): E432, H434, and E477. Substrate is bound by residues E477 and 553 to 556 (EYAH). E477 serves as the catalytic Proton donor. Residue E553 is the Nucleophile of the active site. N613 provides a ligand contact to Mg(2+). Na(+) is bound by residues F617 and N620. The substrate site is built by N620 and W1041.

This sequence belongs to the glycosyl hydrolase 2 family. As to quaternary structure, homotetramer. It depends on Mg(2+) as a cofactor. The cofactor is Na(+).

The enzyme catalyses Hydrolysis of terminal non-reducing beta-D-galactose residues in beta-D-galactosides.. The chain is Beta-galactosidase from Yersinia pseudotuberculosis serotype IB (strain PB1/+).